Reading from the N-terminus, the 260-residue chain is Protein TONNEAU 1a (260 aa).

One can recognise a LisH domain in the interval 73-105; sequence SGRLLSALICEYLDWAQLNHTLIVYQPESNLPK. Disordered regions lie at residues 147 to 224 and 236 to 260; these read TQGM…EEVT and DRKT…EGRD. The segment covering 161 to 175 has biased composition (low complexity); that stretch reads ESSSSLESRNPPRRS. Basic and acidic residues predominate over residues 248 to 260; sequence NVRDGTNEEEGRD.

In terms of assembly, interacts with CEN1, LNG1/TRM2 and LNG2/TRM1 (via C-terminus).

It is found in the cytoplasm. It localises to the cytoskeleton. Its function is as follows. Involved in the control of the dynamic organization of the cortical cytoskeleton. May play a role in the organization of microtubule arrays at the centrosome through interaction with centrin 1 (CEN1). In Arabidopsis thaliana (Mouse-ear cress), this protein is Protein TONNEAU 1a (TON1A).